Here is a 349-residue protein sequence, read N- to C-terminus: MQTYGNSAVTYGWWAGNSGVTNRSGKFIAAHAAHTGLIAFWAGAFTLFELARFDPSVPMGHQPLIALPHLATLGIGFDETGTFVGGSAVVAVAVCHLVGSMAYGAGGLMHSLLFSSDMQESSVPQARKFKLEWDNPDNQTFILGHHLIFFGVACIWFVEWARIHGVYDPSIGAIRQVEYDLNLSHIWDHQFDFLTIDSLEDVMGGHAFLAFLEITGGAFHIATKQVGEYTKFKGAGLLSAEAILSWSLAGIGWMAVVAAFWSATNTTVYPVEWFGEPLALKFGISPYWVDTVDLGSAHTSRAWLANVHYYFGFFFIQGHLWHALRAMGFDFKRVTSALSNLDTASVSLK.

6 helical membrane-spanning segments follow: residues 27–47, 57–77, 89–109, 202–222, 242–262, and 304–324; these read FIAA…AFTL, VPMG…GIGF, VVAV…GGLM, VMGG…FHIA, AILS…AFWS, and LANV…WHAL.

Belongs to the PsbB/PsbC family. IsiA/Pcb subfamily. In terms of assembly, the antenna complex consists of divinyl chlorophylls (a and b) and divinyl chlorophyll a/b binding proteins and binds more divinyl chlorophyll b than does the antenna complex from high-light-adapted Prochlorococcus. Divinyl chlorophyll a serves as cofactor. Divinyl chlorophyll b is required as a cofactor.

It is found in the cellular thylakoid membrane. Functionally, the antenna complex functions as a light receptor, it captures and delivers excitation energy to photosystems II and I. The Prochlorales pcb genes are not related to higher plant LHCs. This chain is Divinyl chlorophyll a/b light-harvesting protein PcbA (pcbA), found in Prochlorococcus marinus (strain NATL2A).